The sequence spans 116 residues: Large ribosomal subunit protein bL20 (116 aa).

It belongs to the bacterial ribosomal protein bL20 family.

Binds directly to 23S ribosomal RNA and is necessary for the in vitro assembly process of the 50S ribosomal subunit. It is not involved in the protein synthesizing functions of that subunit. The protein is Large ribosomal subunit protein bL20 of Hydrogenobaculum sp. (strain Y04AAS1).